Consider the following 321-residue polypeptide: tRNA-dihydrouridine synthase B (321 aa).

Residues 16-18 (PMA) and Q70 each bind FMN. C100 serves as the catalytic Proton donor. FMN is bound by residues K139, 200 to 202 (NGD), and 224 to 225 (GR).

It belongs to the Dus family. DusB subfamily. It depends on FMN as a cofactor.

The catalysed reaction is a 5,6-dihydrouridine in tRNA + NAD(+) = a uridine in tRNA + NADH + H(+). The enzyme catalyses a 5,6-dihydrouridine in tRNA + NADP(+) = a uridine in tRNA + NADPH + H(+). Functionally, catalyzes the synthesis of 5,6-dihydrouridine (D), a modified base found in the D-loop of most tRNAs, via the reduction of the C5-C6 double bond in target uridines. This chain is tRNA-dihydrouridine synthase B, found in Klebsiella pneumoniae.